The sequence spans 472 residues: Lycopene beta cyclase, chloroplastic (472 aa).

The transit peptide at 1–25 directs the protein to the chloroplast; sequence MDALLTSPFIPLKKPSHNRKSNTTT. The segment at 1 to 27 is disordered; that stretch reads MDALLTSPFIPLKKPSHNRKSNTTTAS. Position 62–90 (62–90) interacts with NAD(+); sequence LAVVGGGPAGLAVAKRVSDAGLSVCSIDP.

Belongs to the lycopene cyclase family. In terms of tissue distribution, expressed in flower buds and lips. Detected in roots and leaves.

The protein localises to the plastid. It is found in the chloroplast. It carries out the reaction a carotenoid psi-end group = a carotenoid beta-end derivative. It functions in the pathway carotenoid biosynthesis; beta-carotene biosynthesis. Its pathway is carotenoid biosynthesis; beta-zeacarotene biosynthesis. Its function is as follows. Catalyzes the double cyclization reaction which converts lycopene to beta-carotene and neurosporene to beta-zeacarotene. The chain is Lycopene beta cyclase, chloroplastic (LCY-B) from Oncidium hybrid cultivar (Orchid).